We begin with the raw amino-acid sequence, 267 residues long: Phosphatidylglycerol--prolipoprotein diacylglyceryl transferase (267 aa).

The next 4 helical transmembrane spans lie at 20 to 40 (LEIR…VYLA), 57 to 77 (FILI…VAFS), 88 to 108 (IFAI…GAIV), and 117 to 137 (FINT…AQAI). A 1,2-diacyl-sn-glycero-3-phospho-(1'-sn-glycerol) is bound at residue arginine 139. The next 3 membrane-spanning stretches (helical) occupy residues 175–195 (QPTF…VCVL), 205–225 (GEIT…IEGL), and 235–255 (IRVS…MVVL).

Belongs to the Lgt family.

It is found in the cell membrane. The enzyme catalyses L-cysteinyl-[prolipoprotein] + a 1,2-diacyl-sn-glycero-3-phospho-(1'-sn-glycerol) = an S-1,2-diacyl-sn-glyceryl-L-cysteinyl-[prolipoprotein] + sn-glycerol 1-phosphate + H(+). It participates in protein modification; lipoprotein biosynthesis (diacylglyceryl transfer). Functionally, catalyzes the transfer of the diacylglyceryl group from phosphatidylglycerol to the sulfhydryl group of the N-terminal cysteine of a prolipoprotein, the first step in the formation of mature lipoproteins. The chain is Phosphatidylglycerol--prolipoprotein diacylglyceryl transferase from Streptococcus suis (strain 98HAH33).